Consider the following 623-residue polypeptide: Protein Atg16l2 (623 aa).

Residues 64–79 (PKDAISTRHEDWREEV) show a composition bias toward basic and acidic residues. The tract at residues 64–93 (PKDAISTRHEDWREEVSGTGPDQVSSPASL) is disordered. Positions 116–229 (VKKSAALDTL…ANQALVSQEL (114 aa)) form a coiled coil. 7 WD repeats span residues 338 to 377 (AHLS…LEAN), 382 to 421 (GAGG…SKET), 424 to 458 (GHKD…LGRA), 459 to 502 (YCSR…CIQV), 504 to 543 (PVQG…IRQV), 550 to 589 (KCSS…LETS), and 593 to 623 (PHCT…VLWH).

Belongs to the WD repeat ATG16 family. In terms of assembly, homooligomer. Heterooligomer with ATG16L2. Interacts with ATG5. Self-oligomerizes to form a 800-kDa complex composed of ATG12-ATG5 and ATG16L2. Interacts with RAB33B. In terms of tissue distribution, widely expressed.

Its subcellular location is the cytoplasm. The protein resides in the cytosol. Its function is as follows. May play a role in regulating epithelial homeostasis in an ATG16L1-dependent manner. This chain is Protein Atg16l2 (Atg16l2), found in Mus musculus (Mouse).